The primary structure comprises 454 residues: Growth/differentiation factor 6 (454 aa).

Residues 1-22 form the signal peptide; the sequence is MDTPRVLLWAIFLISFLWDLPG. Residues 23-334 constitute a propeptide that is removed on maturation; that stretch reads FQQASISSSS…LPSPGRRRRR (312 aa). Residues 28–93 form a disordered region; sequence ISSSSSSSTE…QGQEPPGRGL (66 aa). Composition is skewed to basic and acidic residues over residues 39 to 52 and 60 to 73; these read DSTK…EGKM and AEGR…LRQK. A compositionally biased stretch (low complexity) spans 81-92; it reads GQHQGQEPPGRG. The N-linked (GlcNAc...) asparagine glycan is linked to N117. Disordered stretches follow at residues 247–268 and 303–350; these read DTGA…SLGF and AEAA…KKSR. A compositionally biased stretch (low complexity) spans 303 to 319; sequence AEAAGAEGSWPAPSGSP. The span at 329–350 shows a compositional bias: basic residues; that stretch reads GRRRRRTAFASRHGKRHGKKSR. 3 disulfides stabilise this stretch: C353-C419, C382-C451, and C386-C453.

This sequence belongs to the TGF-beta family. In terms of assembly, homodimer; disulfide-linked. In terms of tissue distribution, expressed in different subsets of developing joints. Highly expressed in the cochlea.

The protein localises to the secreted. Growth factor that controls proliferation and cellular differentiation in the retina and bone formation. Plays a key role in regulating apoptosis during retinal development. Establishes dorsal-ventral positional information in the retina and controls the formation of the retinotectal map. Required for normal formation of bones and joints in the limbs, skull, digits and axial skeleton. Plays a key role in establishing boundaries between skeletal elements during development. Regulation of GDF6 expression seems to be a mechanism for evolving species-specific changes in skeletal structures. Seems to positively regulate differentiation of chondrogenic tissue through the growth factor receptors subunits BMPR1A, BMPR1B, BMPR2 and ACVR2A, leading to the activation of SMAD1-SMAD5-SMAD8 complex. The regulation of chondrogenic differentiation is inhibited by NOG. Also involved in the induction of adipogenesis from mesenchymal stem cells. This mechanism acts through the growth factor receptors subunits BMPR1A, BMPR2 and ACVR2A and the activation of SMAD1-SMAD5-SMAD8 complex and MAPK14/p38. The chain is Growth/differentiation factor 6 (Gdf6) from Mus musculus (Mouse).